We begin with the raw amino-acid sequence, 405 residues long: MRSVQEHQRVVAEMMRACRPITVPLTQAQGLVLGGDVVAPLSLPVFDNSAMDGYAVRAEDTSGATPQNPVMLPVAEDIPAGRADMLTLQPVTAHRIMTGAPVPTGATAIVPVEATDGGVDSVAIRQQATPGKHIRRSGEDVAAGTTVLHNGQIVTPAVLGLAAALGLAELPVLPRQRVLVISTGSELASPGTPLQPGQIYESNSIMLAAAVRDAGAAVVATATAGDDVAQFGAILDRYAVDADLIITSGGVSAGAYEVVKDAFGSADYRGGDHGVEFVKVAMQPGMPQGVGRVAGTPIVTLPGNPVSALVSFEVFIRPPLRMAMGLPDPYRPHRSAVLTASLTSPRGKRQFRRAILDHQAGTVISYGPPASHHLRWLASANGLLDIPEDVVEVAAGTQLQVWDLT.

Belongs to the MoeA family. The cofactor is Mg(2+).

The catalysed reaction is adenylyl-molybdopterin + molybdate = Mo-molybdopterin + AMP + H(+). Its pathway is cofactor biosynthesis; molybdopterin biosynthesis. Its function is as follows. Catalyzes the insertion of molybdate into adenylated molybdopterin with the concomitant release of AMP. This chain is Molybdopterin molybdenumtransferase 2 (moaE2), found in Mycobacterium tuberculosis (strain CDC 1551 / Oshkosh).